The primary structure comprises 158 residues: MLYLTQRLETPAAATASVTLPIDVRVKSRVKVTLNDGREAGLLLPRGLLLRGGDVLSNEEGTEFVQVIAADEGVSVVRCDDPFMLAKACYHLGNRHVPLQIMPGELRYHHDHVLDDMLRQFGLTVTFGQLPFEPEAGAYASESHGHHHAHHAHHAHSH.

The protein belongs to the UreE family.

The protein resides in the cytoplasm. Functionally, involved in urease metallocenter assembly. Binds nickel. Probably functions as a nickel donor during metallocenter assembly. This chain is Urease accessory protein UreE, found in Klebsiella pneumoniae (strain 342).